Reading from the N-terminus, the 213-residue chain is Probable nicotinate-nucleotide adenylyltransferase (213 aa).

This sequence belongs to the NadD family.

It carries out the reaction nicotinate beta-D-ribonucleotide + ATP + H(+) = deamido-NAD(+) + diphosphate. It participates in cofactor biosynthesis; NAD(+) biosynthesis; deamido-NAD(+) from nicotinate D-ribonucleotide: step 1/1. Its function is as follows. Catalyzes the reversible adenylation of nicotinate mononucleotide (NaMN) to nicotinic acid adenine dinucleotide (NaAD). This chain is Probable nicotinate-nucleotide adenylyltransferase, found in Ruegeria pomeroyi (strain ATCC 700808 / DSM 15171 / DSS-3) (Silicibacter pomeroyi).